Here is a 216-residue protein sequence, read N- to C-terminus: Chloramphenicol acetyltransferase (216 aa).

The Proton acceptor role is filled by His189.

The protein belongs to the chloramphenicol acetyltransferase family. As to quaternary structure, homotrimer.

It carries out the reaction chloramphenicol + acetyl-CoA = chloramphenicol 3-acetate + CoA. Its function is as follows. This enzyme is an effector of chloramphenicol resistance in bacteria. This Staphylococcus aureus protein is Chloramphenicol acetyltransferase (cat).